The sequence spans 445 residues: Tubulin beta-1 chain (445 aa).

An MREI motif motif is present at residues 1 to 4; that stretch reads MREI. GTP contacts are provided by glutamine 11, glutamate 69, serine 138, glycine 142, threonine 143, glycine 144, asparagine 204, and asparagine 226. Residue glutamate 69 participates in Mg(2+) binding. Positions 424–445 are disordered; sequence QYQDATADEQGEFEEEGEEDEA. The span at 429-445 shows a compositional bias: acidic residues; sequence TADEQGEFEEEGEEDEA. A 5-glutamyl polyglutamate modification is found at glutamate 438.

The protein belongs to the tubulin family. As to quaternary structure, dimer of alpha and beta chains. A typical microtubule is a hollow water-filled tube with an outer diameter of 25 nm and an inner diameter of 15 nM. Alpha-beta heterodimers associate head-to-tail to form protofilaments running lengthwise along the microtubule wall with the beta-tubulin subunit facing the microtubule plus end conferring a structural polarity. Microtubules usually have 13 protofilaments but different protofilament numbers can be found in some organisms and specialized cells. Requires Mg(2+) as cofactor. In terms of processing, some glutamate residues at the C-terminus are polyglycylated, resulting in polyglycine chains on the gamma-carboxyl group. Glycylation is mainly limited to tubulin incorporated into axonemes (cilia and flagella) whereas glutamylation is prevalent in neuronal cells, centrioles, axonemes, and the mitotic spindle. Both modifications can coexist on the same protein on adjacent residues, and lowering polyglycylation levels increases polyglutamylation, and reciprocally. The precise function of polyglycylation is still unclear. Some glutamate residues at the C-terminus are polyglutamylated, resulting in polyglutamate chains on the gamma-carboxyl group. Polyglutamylation plays a key role in microtubule severing by spastin (SPAST). SPAST preferentially recognizes and acts on microtubules decorated with short polyglutamate tails: severing activity by SPAST increases as the number of glutamates per tubulin rises from one to eight, but decreases beyond this glutamylation threshold. Highly expressed in skeletal muscle.

Its subcellular location is the cytoplasm. It localises to the cytoskeleton. Its function is as follows. Tubulin is the major constituent of microtubules, a cylinder consisting of laterally associated linear protofilaments composed of alpha- and beta-tubulin heterodimers. Microtubules grow by the addition of GTP-tubulin dimers to the microtubule end, where a stabilizing cap forms. Below the cap, tubulin dimers are in GDP-bound state, owing to GTPase activity of alpha-tubulin. The protein is Tubulin beta-1 chain of Gallus gallus (Chicken).